Reading from the N-terminus, the 120-residue chain is Large ribosomal subunit protein bL19 (120 aa).

This sequence belongs to the bacterial ribosomal protein bL19 family.

This protein is located at the 30S-50S ribosomal subunit interface and may play a role in the structure and function of the aminoacyl-tRNA binding site. The protein is Large ribosomal subunit protein bL19 of Chlorobium limicola (strain DSM 245 / NBRC 103803 / 6330).